Here is a 368-residue protein sequence, read N- to C-terminus: 4-hydroxy-3-methylbut-2-en-1-yl diphosphate synthase (flavodoxin) (368 aa).

4 residues coordinate [4Fe-4S] cluster: C268, C271, C303, and E310.

It belongs to the IspG family. [4Fe-4S] cluster serves as cofactor.

The catalysed reaction is (2E)-4-hydroxy-3-methylbut-2-enyl diphosphate + oxidized [flavodoxin] + H2O + 2 H(+) = 2-C-methyl-D-erythritol 2,4-cyclic diphosphate + reduced [flavodoxin]. It functions in the pathway isoprenoid biosynthesis; isopentenyl diphosphate biosynthesis via DXP pathway; isopentenyl diphosphate from 1-deoxy-D-xylulose 5-phosphate: step 5/6. Its function is as follows. Converts 2C-methyl-D-erythritol 2,4-cyclodiphosphate (ME-2,4cPP) into 1-hydroxy-2-methyl-2-(E)-butenyl 4-diphosphate. The sequence is that of 4-hydroxy-3-methylbut-2-en-1-yl diphosphate synthase (flavodoxin) from Listeria monocytogenes serotype 4b (strain F2365).